Here is a 130-residue protein sequence, read N- to C-terminus: Protachykinin-1 (130 aa).

A signal peptide spans 1 to 19 (MKILVAVAVFFLVSTQLFA). Residues 20 to 56 (EEIDANDDLNYWSDWSDSDQIKEAMPEPFEHLLQRIA) constitute a propeptide that is removed on maturation. Methionine amide is present on residues Met68 and Met107.

The protein belongs to the tachykinin family. The substance P form is cleaved at Pro-59 by the prolyl endopeptidase FAP (seprase) activity (in vitro). Substance P is also cleaved and degraded by Angiotensin-converting enzyme (ACE) and neprilysin (MME).

The protein resides in the secreted. Its function is as follows. Tachykinins are active peptides which excite neurons, evoke behavioral responses, are potent vasodilators and secretagogues, and contract (directly or indirectly) many smooth muscles. This Mus musculus (Mouse) protein is Protachykinin-1 (Tac1).